The chain runs to 77 residues: Small ribosomal subunit protein bS21 (77 aa).

The segment covering Lys-38 to Arg-52 has biased composition (basic and acidic residues). The segment at Lys-38–Arg-77 is disordered. The segment covering Arg-53–Ala-62 has biased composition (basic residues).

The protein belongs to the bacterial ribosomal protein bS21 family.

This chain is Small ribosomal subunit protein bS21, found in Bartonella bacilliformis (strain ATCC 35685 / KC583 / Herrer 020/F12,63).